The primary structure comprises 632 residues: Fem-3 mRNA-binding factor 2 (632 aa).

Residues 1-11 (MDQSKMRRTNQ) are compositionally biased toward basic residues. Residues 1-37 (MDQSKMRRTNQFRKTSQKPPSTGIDSYPTPAQSPMAQ) are disordered. Residues 12 to 35 (FRKTSQKPPSTGIDSYPTPAQSPM) are compositionally biased toward polar residues. In terms of domain architecture, PUM-HD spans 162 to 566 (TRSNNVLPTW…KMIETLANLR (405 aa)). 8 Pumilio repeats span residues 187–225 (EVLD…QLFE), 226–264 (QVIG…GYTK), 271–307 (NFIS…KLVQ), 308–332 (ALPR…QKVV), 345–384 (DFVA…DLTS), 400–436 (SVTN…CIIE), 438–473 (CLMR…EMMD), and 484–521 (DTGK…RQTK). Residues 609 to 632 (MLEPRSNKSSVSVKFSSSGSHGDD) form a disordered region. Positions 615 to 632 (NKSSVSVKFSSSGSHGDD) are enriched in low complexity.

As to quaternary structure, interacts (via C-terminus) with gld-3 isoform A in an RNA-independent manner. Interacts with dlc-1, and is required for the localization of fbf-2 to P granules. Interacts (via RNA-binding domain) with lst-1, probably displaces bound auto-inhibitory C-terminal tail and alters its RNA-binding affinity. As to expression, expressed specifically in the germline (at protein level).

Its subcellular location is the cytoplasm. The protein resides in the cytoplasmic granule. Its function is as follows. RNA-binding protein that binds to the consensus sequence 5'-UGUGCCAUA-3' in mRNA 3'-UTRs. Involved in the control of stem cells and sex determination in the C.elegans hermaphrodite germline. May also play a role in the hermaphrodite germline proliferation and oogenesis. By binding to the 3'-UTR, represses phosphatase lip-1 expression in the distal part of the germline mitotic zone. Binds specifically to the regulatory region of fem-3 3'-UTR and mediates the sperm/oocyte switch. Negatively regulates gld-3 expression possibly by directly binding to two sites within the gld-3 isoform b 3'-UTR. Suppresses germline tumor formation by preventing the dedifferentiation of secondary spermatocytes. C-terminal disordered region probably auto-inhibits RNA binding; auto-inhibition may be reversed by interaction with lst-1. The chain is Fem-3 mRNA-binding factor 2 from Caenorhabditis elegans.